The chain runs to 84 residues: UPF0457 protein BT9727_2307 (84 aa).

Belongs to the UPF0457 family.

The protein is UPF0457 protein BT9727_2307 of Bacillus thuringiensis subsp. konkukian (strain 97-27).